A 176-amino-acid chain; its full sequence is Large ribosomal subunit protein uL10 (176 aa).

It belongs to the universal ribosomal protein uL10 family. Part of the ribosomal stalk of the 50S ribosomal subunit. The N-terminus interacts with L11 and the large rRNA to form the base of the stalk. The C-terminus forms an elongated spine to which L12 dimers bind in a sequential fashion forming a multimeric L10(L12)X complex.

Forms part of the ribosomal stalk, playing a central role in the interaction of the ribosome with GTP-bound translation factors. The polypeptide is Large ribosomal subunit protein uL10 (Teredinibacter turnerae (strain ATCC 39867 / T7901)).